Consider the following 95-residue polypeptide: Co-chaperonin GroES (95 aa).

The protein belongs to the GroES chaperonin family. As to quaternary structure, heptamer of 7 subunits arranged in a ring. Interacts with the chaperonin GroEL.

The protein resides in the cytoplasm. Functionally, together with the chaperonin GroEL, plays an essential role in assisting protein folding. The GroEL-GroES system forms a nano-cage that allows encapsulation of the non-native substrate proteins and provides a physical environment optimized to promote and accelerate protein folding. GroES binds to the apical surface of the GroEL ring, thereby capping the opening of the GroEL channel. This chain is Co-chaperonin GroES, found in Desulfosudis oleivorans (strain DSM 6200 / JCM 39069 / Hxd3) (Desulfococcus oleovorans).